Reading from the N-terminus, the 157-residue chain is Glutaredoxin-2, mitochondrial (157 aa).

A mitochondrion-targeting transit peptide spans 1–18 (MYWRRAALVGTRLIPVRS). Serine 20 is subject to Phosphoserine. The region spanning 51–151 (VNQIQETISN…PLVHQCHLKN (101 aa)) is the Glutaredoxin domain. Cysteine 62 contacts [2Fe-2S] cluster. Residue lysine 68 participates in glutathione binding. Position 71 is an S-glutathionyl cysteine; alternate (cysteine 71). Cysteine 71 and cysteine 74 are oxidised to a cystine. Glutathione is bound by residues glutamine 103 and valine 115. Cysteine 147 is a [2Fe-2S] cluster binding site.

This sequence belongs to the glutaredoxin family. In terms of assembly, monomer; active form. Homodimer; inactive form. The homodimer is probably linked by 1 2Fe-2S cluster.

The protein localises to the mitochondrion. With respect to regulation, the 2Fe-2S present in the homodimer leads to inactivation of the enzyme. The 2Fe-2S may serve as a redox sensor: the presence of one-electron oxidants or reductants leading to the loss of the 2Fe-2S cluster, subsequent monomerization and activation of the enzyme. In terms of biological role, glutathione-dependent oxidoreductase that facilitates the maintenance of mitochondrial redox homeostasis upon induction of apoptosis by oxidative stress. Involved in response to hydrogen peroxide and regulation of apoptosis caused by oxidative stress. Acts as a very efficient catalyst of monothiol reactions because of its high affinity for protein glutathione-mixed disulfides. Can receive electrons not only from glutathione (GSH), but also from thioredoxin reductase supporting both monothiol and dithiol reactions. Efficiently catalyzes both glutathionylation and deglutathionylation of mitochondrial complex I, which in turn regulates the superoxide production by the complex. Overexpression decreases the susceptibility to apoptosis and prevents loss of cardiolipin and cytochrome c release. The chain is Glutaredoxin-2, mitochondrial (GLRX2) from Bos taurus (Bovine).